The primary structure comprises 307 residues: UDP-N-acetylenolpyruvoylglucosamine reductase (307 aa).

The 166-residue stretch at 33 to 198 (KVGGPADIFV…LNATFALQKG (166 aa)) folds into the FAD-binding PCMH-type domain. Arginine 177 is a catalytic residue. Serine 227 functions as the Proton donor in the catalytic mechanism. Glutamate 297 is an active-site residue.

It belongs to the MurB family. It depends on FAD as a cofactor.

It is found in the cytoplasm. It carries out the reaction UDP-N-acetyl-alpha-D-muramate + NADP(+) = UDP-N-acetyl-3-O-(1-carboxyvinyl)-alpha-D-glucosamine + NADPH + H(+). It functions in the pathway cell wall biogenesis; peptidoglycan biosynthesis. In terms of biological role, cell wall formation. This Clostridium novyi (strain NT) protein is UDP-N-acetylenolpyruvoylglucosamine reductase.